A 2098-amino-acid chain; its full sequence is Non-reducing polyketide synthase crz7 (2098 aa).

A Starter acyltransferase (SAT) domain is found at 8–243; sequence ILFGDQTVDP…IKLPITAAFH (236 aa). The Ketosynthase family 3 (KS3) domain maps to 364-789; it reads SSDIAIIGFA…GGNTSLLLED (426 aa). Catalysis depends on for beta-ketoacyl synthase activity residues C532, H667, and H706. A Malonyl-CoA:ACP transacylase (MAT) domain is found at 887-1211; it reads IFLFTGQGSQ…IANAYNSGVK (325 aa). The interval 1270–1404 is N-terminal hotdog fold; sequence TCLQGVENET…CTVMYGDGQQ (135 aa). The PKS/mFAS DH domain occupies 1270–1578; it reads TCLQGVENET…FQQMKRTTLQ (309 aa). H1305 serves as the catalytic Proton acceptor; for dehydratase activity. A C-terminal hotdog fold region spans residues 1431 to 1578; the sequence is IHRMLKEMIY…FQQMKRTTLQ (148 aa). D1491 acts as the Proton donor; for dehydratase activity in catalysis. The Carrier 1 domain occupies 1613–1690; it reads QSPSAGFSKV…ELRAFFLDKM (78 aa). At S1650 the chain carries O-(pantetheine 4'-phosphoryl)serine. Positions 1693 to 1725 are disordered; it reads PQATANDDDSDDSSEDEDPGYSRSQSNSTISTP. The span at 1698 to 1711 shows a compositional bias: acidic residues; the sequence is NDDDSDDSSEDEDP. Residues 1714 to 1724 are compositionally biased toward polar residues; that stretch reads SRSQSNSTIST. A Carrier 2 domain is found at 1725–1802; the sequence is PEEPDVVSIL…DVQKALGPTS (78 aa). An O-(pantetheine 4'-phosphoryl)serine modification is found at S1762. The segment at 1844–2080 is thioesterase (TE) domain; it reads LFLLPDGAGS…VSGNHFSIMF (237 aa).

It depends on pantetheine 4'-phosphate as a cofactor.

Its pathway is secondary metabolite biosynthesis. In terms of biological role, non-reducing polyketide synthase; part of the gene cluster that mediates the biosynthesis of the red pigment cristazarin, a naphthazarin derivative. The polyketide product of crz7 is likely 2-acetyl-1,3,6,8-tetrahydoxynaphthalene (AT4HN) from which a probable biosynthetic route of cristazarin can be deduced. The presence of two O-methyltransferases (crz1 and crz2), an enoyl reductase (crz5), an oxidase (crz8), and a short-chain dehydrogenase (crz9) encoded in the cristazarin biosynthetic cluster is consistent with methylation of a hydroxyl group, addition of two hydroxyl groups to the naphthalene core ring, and reduction of the acetyl side chain. This Cladonia metacorallifera (Lichen-forming fungus) protein is Non-reducing polyketide synthase crz7.